We begin with the raw amino-acid sequence, 97 residues long: Ferredoxin-like protein YdiT (97 aa).

The protein belongs to the bacterial-type ferredoxin family. FixX subfamily.

Could be a 3Fe-4S cluster-containing protein. Probably participates in a redox process with YdiQ, YdiR and YdiS. This Escherichia coli (strain K12) protein is Ferredoxin-like protein YdiT (ydiT).